The following is a 123-amino-acid chain: Small ribosomal subunit protein uS12cz/uS12cy (123 aa).

Belongs to the universal ribosomal protein uS12 family. In terms of assembly, part of the 30S ribosomal subunit.

It is found in the plastid. The protein localises to the chloroplast. Functionally, with S4 and S5 plays an important role in translational accuracy. Located at the interface of the 30S and 50S subunits. This chain is Small ribosomal subunit protein uS12cz/uS12cy (rps12-A), found in Gossypium barbadense (Sea Island cotton).